The primary structure comprises 178 residues: Caveolin-1 (178 aa).

Ser2 bears the N-acetylserine mark. Ser2 carries the phosphoserine modification. The tract at residues Ser2–Val94 is required for homooligomerization. Residues Ser2–Ser104 are Cytoplasmic-facing. Lys5 bears the N6-acetyllysine; alternate mark. Lys5 participates in a covalent cross-link: Glycyl lysine isopeptide (Lys-Gly) (interchain with G-Cter in ubiquitin); alternate. At Tyr6 the chain carries Phosphotyrosine. Phosphoserine is present on Ser9. Tyr14 carries the post-translational modification Phosphotyrosine; by ABL1. Position 25 is a phosphotyrosine (Tyr25). Residues Lys26, Lys30, Lys39, Lys47, and Lys57 each participate in a glycyl lysine isopeptide (Lys-Gly) (interchain with G-Cter in ubiquitin) cross-link. The interval Asp82–Val94 is interaction with CAVIN3. The helical intramembrane region spans Ala105–Leu125. Residues His126–Ile178 lie on the Cytoplasmic side of the membrane. Residues Val131–Gln142 are interacts with SPRY1, SPRY2, SPRY3 and SPRY4. Residues Cys133, Cys143, and Cys156 are each lipidated (S-palmitoyl cysteine). The segment at Ser149–Phe160 is interacts with SPRY1, SPRY2, and SPRY4. The interacts with SPRY1, SPRY2, SPRY3 and SPRY4 stretch occupies residues Phe167 to Ile178.

The protein belongs to the caveolin family. In terms of assembly, homooligomer. Interacts with GLIPR2. Interacts with NOSTRIN. Interacts with SNAP25 and STX1A. Interacts (via the N-terminus) with DPP4; the interaction is direct. Interacts with CTNNB1, CDH1 and JUP. Interacts with PACSIN2; this interaction induces membrane tubulation. Interacts with SLC7A9. Interacts with BMX and BTK. Interacts with TGFBR1. Interacts with CAVIN3 (via leucine-zipper domain) in a cholesterol-sensitive manner. Interacts with CAVIN1. Interacts with EHD2 in a cholesterol-dependent manner. Forms a ternary complex with UBXN6 and VCP; mediates CAV1 targeting to lysosomes for degradation. Interacts with ABCG1; this interaction regulates ABCG1-mediated cholesterol efflux. Interacts with NEU3; this interaction enhances NEU3 sialidase activity within caveola. Interacts (via C-terminus) with SPRY1, SPRY2 (via C-terminus), SPRY3, and SPRY4. Interacts with IGFBP5; this interaction allows trafficking of IGFBP5 from the plasma membrane to the nucleus. Post-translationally, phosphorylated at Tyr-14 by ABL1 in response to oxidative stress. Ubiquitinated. Undergo monoubiquitination and multi- and/or polyubiquitination. Monoubiquitination of N-terminal lysines promotes integration in a ternary complex with UBXN6 and VCP which promotes oligomeric CAV1 targeting to lysosomes for degradation. Ubiquitinated by ZNRF1; leading to degradation and modulation of the TLR4-mediated immune response.

It localises to the golgi apparatus membrane. It is found in the cell membrane. Its subcellular location is the membrane. The protein resides in the caveola. The protein localises to the membrane raft. May act as a scaffolding protein within caveolar membranes. Forms a stable heterooligomeric complex with CAV2 that targets to lipid rafts and drives caveolae formation. Mediates the recruitment of CAVIN proteins (CAVIN1/2/3/4) to the caveolae. Interacts directly with G-protein alpha subunits and can functionally regulate their activity. Involved in the costimulatory signal essential for T-cell receptor (TCR)-mediated T-cell activation. Its binding to DPP4 induces T-cell proliferation and NF-kappa-B activation in a T-cell receptor/CD3-dependent manner. Recruits CTNNB1 to caveolar membranes and may regulate CTNNB1-mediated signaling through the Wnt pathway. Negatively regulates TGFB1-mediated activation of SMAD2/3 by mediating the internalization of TGFBR1 from membrane rafts leading to its subsequent degradation. Binds 20(S)-hydroxycholesterol (20(S)-OHC). This is Caveolin-1 (CAV1) from Muntiacus reevesi (Reeves' muntjac).